Here is a 243-residue protein sequence, read N- to C-terminus: Homeobox protein nob-1 (243 aa).

Positions 1-12 (MISVMQQMINND) are enriched in polar residues. Disordered regions lie at residues 1–23 (MISV…SITS) and 40–67 (SIQG…TGMV). Residues 162 to 221 (GKKKRQPYKKDQISRLEYEYSVNQYLTNKRRSELSAQLMLDEKQVKVWFQNRRMKDKKLR) constitute a DNA-binding region (homeobox).

This sequence belongs to the abd-b homeobox family. Interacts with nuclear receptor nhr-25. Interacts with geminin homolog gmn-1. Interacts with homeodomain protein ceh-20.

The protein localises to the nucleus. In terms of biological role, transcription factor, involved in posterior embryonic patterning, morphogenetic movements of the posterior hypodermis, and cell fate specification. Binds to the 5'-TAGT-3' motif in regulatory elements of genes, including Meis protein psa-3 and microRNA mir-57. Involved in a negative regulatory loop with mir-57 to specify posterior cell identities. Required for asymmetric division of the T hypodermal cell, acting via the regulation of asymmetric expression of psa-3 in cooperation with ceh-20 and the Wnt-MAPK pathway. Involved in the regulation of the onset of non-apoptotic cell death in the linker cell, acting together with the Wnt signaling pathway. Involved in promoting embryogenesis, in concert with orphan nuclear receptor nhr-25. May regulate expression of transcription factor dmd-3. In Caenorhabditis elegans, this protein is Homeobox protein nob-1.